A 131-amino-acid polypeptide reads, in one-letter code: Small ribosomal subunit protein uS8 (131 aa).

It belongs to the universal ribosomal protein uS8 family. Part of the 30S ribosomal subunit. Contacts proteins S5 and S12.

Functionally, one of the primary rRNA binding proteins, it binds directly to 16S rRNA central domain where it helps coordinate assembly of the platform of the 30S subunit. This Campylobacter jejuni subsp. doylei (strain ATCC BAA-1458 / RM4099 / 269.97) protein is Small ribosomal subunit protein uS8.